Consider the following 244-residue polypeptide: 5'-nucleotidase SurE 2 (244 aa).

A divalent metal cation contacts are provided by Asp8, Asp9, Ser39, and Asn96.

This sequence belongs to the SurE nucleotidase family. A divalent metal cation serves as cofactor.

Its subcellular location is the cytoplasm. It catalyses the reaction a ribonucleoside 5'-phosphate + H2O = a ribonucleoside + phosphate. Nucleotidase that shows phosphatase activity on nucleoside 5'-monophosphates. The polypeptide is 5'-nucleotidase SurE 2 (Thermus thermophilus (strain ATCC BAA-163 / DSM 7039 / HB27)).